A 411-amino-acid polypeptide reads, in one-letter code: Serpin A3-3 (411 aa).

Residues 1 to 24 (MRAERLSPLLALGLLVAGIRSVHC) form the signal peptide. N-linked (GlcNAc...) asparagine glycans are attached at residues Asn-100, Asn-180, Asn-230, Asn-264, and Asn-318.

It belongs to the serpin family. As to quaternary structure, homodimer.

It is found in the cytoplasmic vesicle. It localises to the secretory vesicle. Its subcellular location is the chromaffin granule. The protein resides in the secreted. Serine protease inhibitor. Strongly inhibits elastase and trypsin stoichiometrically at the molar ratio of 1:1. Acts as a moderate inhibitor of plasmin and chymotrypsin. Does not inhibit thrombin, urokinase, kallikrein, tissue plasminogen activator, cathepsin G or the cysteine proteases papain, cathepsin B or cathepsin L. In Bos taurus (Bovine), this protein is Serpin A3-3 (SERPINA3-3).